The primary structure comprises 340 residues: Centromere protein N (340 aa).

2 positions are modified to phosphoserine: Ser-227 and Ser-236.

It belongs to the CENP-N/CHL4 family. Component of the CENPA-NAC complex, at least composed of CENPA, CENPC, CENPH, CENPM, CENPN, CENPT and CENPU. The CENPA-NAC complex interacts with the CENPA-CAD complex, composed of CENPI, CENPK, CENPL, CENPO, CENPP, CENPQ, CENPR and CENPS. Interacts directly with CENPA. Identified in a centromere complex containing histones H2A, H2B and H4, and at least CENPA, CENPB, CENPC, CENPT, CENPN, HJURP, SUPT16H, SSRP1 and RSF1.

The protein resides in the nucleus. It is found in the chromosome. The protein localises to the centromere. Its subcellular location is the kinetochore. Component of the CENPA-NAC (nucleosome-associated) complex, a complex that plays a central role in assembly of kinetochore proteins, mitotic progression and chromosome segregation. The CENPA-NAC complex recruits the CENPA-CAD (nucleosome distal) complex and may be involved in incorporation of newly synthesized CENPA into centromeres. CENPN is the first protein to bind specifically to CENPA nucleosomes and the direct binding of CENPA nucleosomes by CENPN is required for centromere assembly. Required for chromosome congression and efficiently align the chromosomes on a metaphase plate. The sequence is that of Centromere protein N (Cenpn) from Rattus norvegicus (Rat).